Reading from the N-terminus, the 194-residue chain is Outer surface 22 kDa lipoprotein (194 aa).

Positions 1-21 (MYKNGFFKNYLSLFLIFLVIA) are cleaved as a signal peptide. A lipid anchor (N-palmitoyl cysteine) is attached at Cys22. Cys22 carries the S-diacylglycerol cysteine lipid modification.

The protein resides in the cell outer membrane. The sequence is that of Outer surface 22 kDa lipoprotein (p22) from Borreliella burgdorferi (strain ZS7) (Borrelia burgdorferi).